Here is a 287-residue protein sequence, read N- to C-terminus: Large ribosomal subunit protein uL2 (287 aa).

Residues 221-287 (RGSVMNPCDH…SKRSRGGRDS (67 aa)) are disordered. The segment covering 271-287 (LRKRRKTSKRSRGGRDS) has biased composition (basic residues).

Belongs to the universal ribosomal protein uL2 family. As to quaternary structure, part of the 50S ribosomal subunit. Forms a bridge to the 30S subunit in the 70S ribosome.

One of the primary rRNA binding proteins. Required for association of the 30S and 50S subunits to form the 70S ribosome, for tRNA binding and peptide bond formation. It has been suggested to have peptidyltransferase activity; this is somewhat controversial. Makes several contacts with the 16S rRNA in the 70S ribosome. This Synechococcus sp. (strain CC9605) protein is Large ribosomal subunit protein uL2.